The primary structure comprises 870 residues: LPS-assembly protein LptD (870 aa).

The first 25 residues, 1-25 (MKQGKSFIFYCLVLLLCGFQQLSSA), serve as a signal peptide directing secretion.

This sequence belongs to the LptD family. In terms of assembly, component of the lipopolysaccharide transport and assembly complex. Interacts with LptE and LptA.

It is found in the cell outer membrane. In terms of biological role, together with LptE, is involved in the assembly of lipopolysaccharide (LPS) at the surface of the outer membrane. The protein is LPS-assembly protein LptD of Coxiella burnetii (strain RSA 493 / Nine Mile phase I).